The following is a 399-amino-acid chain: Tryptophan synthase beta chain (399 aa).

Residue K92 is modified to N6-(pyridoxal phosphate)lysine.

This sequence belongs to the TrpB family. Tetramer of two alpha and two beta chains. The cofactor is pyridoxal 5'-phosphate.

It catalyses the reaction (1S,2R)-1-C-(indol-3-yl)glycerol 3-phosphate + L-serine = D-glyceraldehyde 3-phosphate + L-tryptophan + H2O. It participates in amino-acid biosynthesis; L-tryptophan biosynthesis; L-tryptophan from chorismate: step 5/5. Functionally, the beta subunit is responsible for the synthesis of L-tryptophan from indole and L-serine. The protein is Tryptophan synthase beta chain of Legionella pneumophila (strain Corby).